The sequence spans 346 residues: Enoyl-[acyl-carrier-protein] reductase, mitochondrial (346 aa).

The N-terminal 22 residues, 1-22 (MQKTIRSQALIYRKFGDPLKVL), are a transit peptide targeting the mitochondrion. Residue Tyr-59 is the Proton donor of the active site. Residues Asn-131, 157–160 (NSGV), 180–182 (RNR), 249–252 (YGGM), 274–276 (VAV), and Lys-332 contribute to the NADP(+) site.

It belongs to the zinc-containing alcohol dehydrogenase family. Quinone oxidoreductase subfamily. Homodimer.

The protein localises to the mitochondrion. The catalysed reaction is a 2,3-saturated acyl-[ACP] + NADP(+) = a (2E)-enoyl-[ACP] + NADPH + H(+). In terms of biological role, catalyzes the NADPH-dependent reduction of trans-2-enoyl thioesters in mitochondrial fatty acid synthesis (fatty acid synthesis type II). Fatty acid chain elongation in mitochondria uses acyl carrier protein (ACP) as an acyl group carrier, but the enzyme accepts both ACP and CoA thioesters as substrates in vitro. May provide the octanoyl chain used for lipoic acid biosynthesis, regulating protein lipoylation and mitochondrial respiratory activity. Involved in iron homeostasis; affecting Fe-S cluster assembly and ceramide metabolism. Required for proper morphology and bioenergetic functions of mitochondria. Required for maintenance of neurons. This chain is Enoyl-[acyl-carrier-protein] reductase, mitochondrial, found in Caenorhabditis elegans.